The sequence spans 179 residues: ATP synthase subunit delta (179 aa).

It belongs to the ATPase delta chain family. F-type ATPases have 2 components, F(1) - the catalytic core - and F(0) - the membrane proton channel. F(1) has five subunits: alpha(3), beta(3), gamma(1), delta(1), epsilon(1). F(0) has three main subunits: a(1), b(2) and c(10-14). The alpha and beta chains form an alternating ring which encloses part of the gamma chain. F(1) is attached to F(0) by a central stalk formed by the gamma and epsilon chains, while a peripheral stalk is formed by the delta and b chains.

It localises to the cell inner membrane. Functionally, f(1)F(0) ATP synthase produces ATP from ADP in the presence of a proton or sodium gradient. F-type ATPases consist of two structural domains, F(1) containing the extramembraneous catalytic core and F(0) containing the membrane proton channel, linked together by a central stalk and a peripheral stalk. During catalysis, ATP synthesis in the catalytic domain of F(1) is coupled via a rotary mechanism of the central stalk subunits to proton translocation. In terms of biological role, this protein is part of the stalk that links CF(0) to CF(1). It either transmits conformational changes from CF(0) to CF(1) or is implicated in proton conduction. In Anaeromyxobacter dehalogenans (strain 2CP-1 / ATCC BAA-258), this protein is ATP synthase subunit delta.